Here is a 147-residue protein sequence, read N- to C-terminus: Chorion class B protein B.L1 (147 aa).

A left arm region spans residues 1-38 (IGCGRGCGGRGYGGLGYGGLGYGGLGYGGLGGGCGRGF). Tandem repeats lie at residues 11–15 (GYGGL), 16–20 (GYGGL), 21–25 (GYGGL), and 26–30 (GYGGL). Positions 11 to 30 (GYGGLGYGGLGYGGLGYGGL) are 4 X 5 AA tandem repeats of G-Y-G-G-L. The interval 39-107 (SGGGLPVATA…GNGAVGITRE (69 aa)) is central domain. Residues 108-147 (GGLGYGAGYGGGYGLGYGGYGGGYGLGYGGYGGCGCGCGY) form a right arm (Gly-rich tandem repeats) region.

The protein belongs to the chorion protein family.

Its function is as follows. This protein is one of many from the eggshell of the silk moth. The polypeptide is Chorion class B protein B.L1 (Bombyx mori (Silk moth)).